Here is a 711-residue protein sequence, read N- to C-terminus: MATVLTTAIDVCFNPQNSDTKKHSLFLKPSLFRQSRSRKLNISCSSLKQPKTLEEEPITTKTPSLSEQLKPLSATTLRQEQTQILSKPKSVWVNPTRPKRSVLSLQRQKRSAYSYNPQIKDLRAFALKLNSSIFTEKSEFLSLLDEIPHPPNRDNALLVLNSLREWQKTHTFFNWVKSKSLFPMETIFYNVTMKSLRFGRQFQLIEEMALEMVKDGVELDNITYSTIITCAKRCNLYNKAIEWFERMYKTGLMPDEVTYSAILDVYSKSGKVEEVLSLYERAVATGWKPDAIAFSVLGKMFGEAGDYDGIRYVLQEMKSMDVKPNVVVYNTLLEAMGRAGKPGLARSLFNEMLEAGLTPNEKTLTALVKIYGKARWARDALQLWEEMKAKKWPMDFILYNTLLNMCADIGLEEEAERLFNDMKESVQCRPDNFSYTAMLNIYGSGGKAEKAMELFEEMLKAGVQVNVMGCTCLVQCLGKAKRIDDVVYVFDLSIKRGVKPDDRLCGCLLSVMALCESSEDAEKVMACLERANKKLVTFVNLIVDEKTEYETVKEEFKLVINATQVEARRPFCNCLIDICRGNNRHERAHELLYLGTLFGLYPGLHNKTIKEWSLDVRSLSVGAAETALEEWMRTLANIIKRQEELPELFLAQTGTGTHRFSQGLANSFALHLQQLSAPFRQSDRPGIFVATKEDLVSWLESKFPPLVTSQA.

The transit peptide at 1-43 (MATVLTTAIDVCFNPQNSDTKKHSLFLKPSLFRQSRSRKLNIS) directs the protein to the chloroplast. PPR repeat units follow at residues 185–219 (ETIF…GVEL), 220–254 (DNIT…GLMP), 255–289 (DEVT…GWKP), 290–324 (DAIA…DVKP), 325–359 (NVVV…GLTP), 360–394 (NEKT…KWPM), 395–425 (DFIL…MKES), 431–465 (DNFS…GVQV), 466–500 (NVMG…GVKP), and 501–535 (DDRL…NKKL). The 83-residue stretch at 614–696 (LDVRSLSVGA…IFVATKEDLV (83 aa)) folds into the Smr domain.

This sequence belongs to the PPR family. P subfamily.

It localises to the plastid. Its subcellular location is the chloroplast. This chain is Pentatricopeptide repeat-containing protein At5g46580, chloroplastic, found in Arabidopsis thaliana (Mouse-ear cress).